The following is a 380-amino-acid chain: Chaperone protein DnaJ 2 (380 aa).

Residues 10–75 enclose the J domain; it reads DYYKILGVSK…KKRKEYDQAR (66 aa). Residues 32-56 are compositionally biased toward basic and acidic residues; that stretch reads KIARDNHPDSHPGDKAAEARFKEAS. Residues 32-63 form a disordered region; sequence KIARDNHPDSHPGDKAAEARFKEASEANDVLS. A CR-type zinc finger spans residues 151 to 230; the sequence is GTTVTMDMVS…CHGSGRAKST (80 aa). Zn(2+) contacts are provided by cysteine 164, cysteine 167, cysteine 181, cysteine 184, cysteine 204, cysteine 207, cysteine 218, and cysteine 221. 4 CXXCXGXG motif repeats span residues 164 to 171, 181 to 188, 204 to 211, and 218 to 225; these read CQACRGTG, CSTCQGSG, CPDCHGRG, and CQVCHGSG.

Belongs to the DnaJ family. As to quaternary structure, homodimer. The cofactor is Zn(2+).

It is found in the cytoplasm. Participates actively in the response to hyperosmotic and heat shock by preventing the aggregation of stress-denatured proteins and by disaggregating proteins, also in an autonomous, DnaK-independent fashion. Unfolded proteins bind initially to DnaJ; upon interaction with the DnaJ-bound protein, DnaK hydrolyzes its bound ATP, resulting in the formation of a stable complex. GrpE releases ADP from DnaK; ATP binding to DnaK triggers the release of the substrate protein, thus completing the reaction cycle. Several rounds of ATP-dependent interactions between DnaJ, DnaK and GrpE are required for fully efficient folding. Also involved, together with DnaK and GrpE, in the DNA replication of plasmids through activation of initiation proteins. The sequence is that of Chaperone protein DnaJ 2 from Cutibacterium acnes (strain DSM 16379 / KPA171202) (Propionibacterium acnes).